Here is a 121-residue protein sequence, read N- to C-terminus: Holo-[acyl-carrier-protein] synthase (121 aa).

Mg(2+) contacts are provided by Asp8 and Glu58.

It belongs to the P-Pant transferase superfamily. AcpS family. Homotrimer. It depends on Mg(2+) as a cofactor.

It is found in the cytoplasm. It carries out the reaction apo-[ACP] + CoA = holo-[ACP] + adenosine 3',5'-bisphosphate + H(+). Its function is as follows. Transfers the 4'-phosphopantetheine moiety from coenzyme A to a Ser of fatty acid acyl-carrier-protein ACP. Also modifies the D-alanyl carrier protein but fails to recognize PCP and AcpK, an acyl carrier protein of secondary metabolism. This is Holo-[acyl-carrier-protein] synthase from Bacillus subtilis (strain 168).